The chain runs to 194 residues: MIILGVDPGLTRCGVGVIEAGEHRRLSFIHVDVVRSSPDITQDLRLLAIYNGLSEKMDRFAPDAVSIERVFAQSNRNTVLGTAQAAGLAMLAAAQRGIPVALHTPTEAKLAITGNGQAQKVQVERMVTRVLNLTKMPTPADAADALALAICHALRPAGALQGGEREQHLTAAQRQWAEAAQNSTRRRKNSDRGM.

Catalysis depends on residues Asp7, Glu68, and Asp141. Asp7, Glu68, and Asp141 together coordinate Mg(2+). The tract at residues 162-194 is disordered; sequence GGEREQHLTAAQRQWAEAAQNSTRRRKNSDRGM. Basic residues predominate over residues 184–194; the sequence is TRRRKNSDRGM.

Belongs to the RuvC family. As to quaternary structure, homodimer which binds Holliday junction (HJ) DNA. The HJ becomes 2-fold symmetrical on binding to RuvC with unstacked arms; it has a different conformation from HJ DNA in complex with RuvA. In the full resolvosome a probable DNA-RuvA(4)-RuvB(12)-RuvC(2) complex forms which resolves the HJ. It depends on Mg(2+) as a cofactor.

It is found in the cytoplasm. The catalysed reaction is Endonucleolytic cleavage at a junction such as a reciprocal single-stranded crossover between two homologous DNA duplexes (Holliday junction).. Functionally, the RuvA-RuvB-RuvC complex processes Holliday junction (HJ) DNA during genetic recombination and DNA repair. Endonuclease that resolves HJ intermediates. Cleaves cruciform DNA by making single-stranded nicks across the HJ at symmetrical positions within the homologous arms, yielding a 5'-phosphate and a 3'-hydroxyl group; requires a central core of homology in the junction. The consensus cleavage sequence is 5'-(A/T)TT(C/G)-3'. Cleavage occurs on the 3'-side of the TT dinucleotide at the point of strand exchange. HJ branch migration catalyzed by RuvA-RuvB allows RuvC to scan DNA until it finds its consensus sequence, where it cleaves and resolves the cruciform DNA. The polypeptide is Crossover junction endodeoxyribonuclease RuvC (Bifidobacterium longum subsp. infantis (strain ATCC 15697 / DSM 20088 / JCM 1222 / NCTC 11817 / S12)).